The sequence spans 462 residues: beta-Tubulin at 65B (462 aa).

GTP contacts are provided by E70, S137, G141, T142, G143, N203, and N225. E70 contributes to the Mg(2+) binding site. Residues 420-462 (DYRSSAEGEDSGGGGGGGGGRSGSAESGEEEATPEAHCQYCTE) form a disordered region. A compositionally biased stretch (gly residues) spans 430-441 (SGGGGGGGGGRS).

The protein belongs to the tubulin family. As to quaternary structure, dimer of alpha and beta chains. A typical microtubule is a hollow water-filled tube with an outer diameter of 25 nm and an inner diameter of 15 nM. Alpha-beta heterodimers associate head-to-tail to form protofilaments running lengthwise along the microtubule wall with the beta-tubulin subunit facing the microtubule plus end conferring a structural polarity. Microtubules usually have 13 protofilaments but different protofilament numbers can be found in some organisms and specialized cells. Requires Mg(2+) as cofactor.

The protein localises to the cytoplasm. Its subcellular location is the cytoskeleton. Its function is as follows. Tubulin is the major constituent of microtubules, a cylinder consisting of laterally associated linear protofilaments composed of alpha- and beta-tubulin heterodimers. Microtubules grow by the addition of GTP-tubulin dimers to the microtubule end, where a stabilizing cap forms. Below the cap, tubulin dimers are in GDP-bound state, owing to GTPase activity of alpha-tubulin. The chain is beta-Tubulin at 65B from Drosophila melanogaster (Fruit fly).